A 353-amino-acid chain; its full sequence is UPF0283 membrane protein YcjF (353 aa).

3 helical membrane-spanning segments follow: residues 70–90, 100–120, and 213–233; these read MVMG…VQWT, VALG…GSVV, and ESTL…FIAW.

Belongs to the UPF0283 family.

It is found in the cell inner membrane. The chain is UPF0283 membrane protein YcjF from Shigella sonnei (strain Ss046).